Consider the following 373-residue polypeptide: StAR-related lipid transfer protein 7, mitochondrial (373 aa).

A mitochondrion-targeting transit peptide spans 1–61 (MFPRRPPATL…YSESSRCALL (61 aa)). Residues 89 to 114 (DEERIQEEELQRSINEMKRLEEMSNI) adopt a coiled-coil conformation. In terms of domain architecture, START spans 115–330 (FQSSGVENYP…LHMATLKAKN (216 aa)). 2 disordered regions span residues 118 to 141 (SGVE…KDKE) and 347 to 373 (SSEA…IEYA).

Post-translationally, proteolytically cleaved by PARL. In terms of tissue distribution, expressed in epithelial cells of airways, peripheral bronchioles and alveoli, as well as in the basal cell layer of the epidermis (at protein level).

It localises to the mitochondrion. Its function is as follows. May play a protective role in mucosal tissues by preventing exaggerated allergic responses. The polypeptide is StAR-related lipid transfer protein 7, mitochondrial (Stard7) (Mus musculus (Mouse)).